A 190-amino-acid chain; its full sequence is MVKKHRETKETDISVELEIYGSGKCEIDTGVGFFDHMLNALCKHSLMDIKLVCKGDLFIDDHHSVEDCGIVLGSAIKESIYPLSCVERYGNSIVVMDEAAVECAIDLSNRPYLVYESSLNEKIGTFDSELIREFFQALAMNAGITLHLIRLRGDNSHHIAEATFKAFAVAFRRAISKNDRMGTPSTKGVL.

This sequence belongs to the imidazoleglycerol-phosphate dehydratase family.

The protein resides in the cytoplasm. It catalyses the reaction D-erythro-1-(imidazol-4-yl)glycerol 3-phosphate = 3-(imidazol-4-yl)-2-oxopropyl phosphate + H2O. The protein operates within amino-acid biosynthesis; L-histidine biosynthesis; L-histidine from 5-phospho-alpha-D-ribose 1-diphosphate: step 6/9. The sequence is that of Imidazoleglycerol-phosphate dehydratase from Campylobacter fetus subsp. fetus (strain 82-40).